We begin with the raw amino-acid sequence, 790 residues long: Cadherin-6 (790 aa).

Residues 1-18 (MRTYRYFLLLFWVGQPYP) form the signal peptide. The propeptide occupies 19–53 (TLSTPLSKRTSGFPAKKRALELSGNSKNELNRSKR). A glycan (N-linked (GlcNAc...) asparagine) is linked at asparagine 49. 5 consecutive Cadherin domains span residues 54-159 (SWMW…EPIF), 160-268 (TKEV…PPRF), 269-383 (PQST…PPVF), 384-486 (SKLA…DNAP), and 487-608 (EFAE…LIHP). At 54-615 (SWMWNQFFLL…IHPTGLSTGA (562 aa)) the chain is on the extracellular side. The N-linked (GlcNAc...) asparagine glycan is linked to asparagine 255. The segment at 259–288 (TDVNDNPPRFPQSTYQFKTPESSPPGTPIG) is disordered. Over residues 269-279 (PQSTYQFKTPE) the composition is skewed to polar residues. Residues asparagine 399, asparagine 437, asparagine 455, and asparagine 536 are each glycosylated (N-linked (GlcNAc...) asparagine). Residues 616–636 (LVAILLCIVILLVTVVLFAAL) traverse the membrane as a helical segment. Residues 637–790 (RRQRKKEPLI…YGGVDSDKDS (154 aa)) lie on the Cytoplasmic side of the membrane. Serine 786 and serine 790 each carry phosphoserine.

Highly expressed in brain, cerebellum, and kidney. Lung, pancreas, and gastric mucosa show a weak expression. Also expressed in certain liver and kidney carcinomas.

Its subcellular location is the cell membrane. Cadherins are calcium-dependent cell adhesion proteins. They preferentially interact with themselves in a homophilic manner in connecting cells; cadherins may thus contribute to the sorting of heterogeneous cell types. The protein is Cadherin-6 (CDH6) of Homo sapiens (Human).